Here is a 177-residue protein sequence, read N- to C-terminus: Chorismate pyruvate-lyase (177 aa).

The substrate site is built by M36, R78, L116, and E157.

This sequence belongs to the UbiC family. As to quaternary structure, monomer.

It localises to the cytoplasm. The enzyme catalyses chorismate = 4-hydroxybenzoate + pyruvate. The protein operates within cofactor biosynthesis; ubiquinone biosynthesis. In terms of biological role, removes the pyruvyl group from chorismate, with concomitant aromatization of the ring, to provide 4-hydroxybenzoate (4HB) for the ubiquinone pathway. In Pectobacterium atrosepticum (strain SCRI 1043 / ATCC BAA-672) (Erwinia carotovora subsp. atroseptica), this protein is Chorismate pyruvate-lyase.